Reading from the N-terminus, the 106-residue chain is Thiosulfate sulfurtransferase GlpE (106 aa).

A Rhodanese domain is found at 17–105; it reads EQNEARLVDI…SYRAELPVIA (89 aa). C65 acts as the Cysteine persulfide intermediate in catalysis.

It belongs to the GlpE family.

The protein resides in the cytoplasm. It catalyses the reaction thiosulfate + hydrogen cyanide = thiocyanate + sulfite + 2 H(+). It carries out the reaction thiosulfate + [thioredoxin]-dithiol = [thioredoxin]-disulfide + hydrogen sulfide + sulfite + 2 H(+). Transferase that catalyzes the transfer of sulfur from thiosulfate to thiophilic acceptors such as cyanide or dithiols. May function in a CysM-independent thiosulfate assimilation pathway by catalyzing the conversion of thiosulfate to sulfite, which can then be used for L-cysteine biosynthesis. The protein is Thiosulfate sulfurtransferase GlpE of Vibrio atlanticus (strain LGP32) (Vibrio splendidus (strain Mel32)).